Consider the following 583-residue polypeptide: CD166 antigen (583 aa).

The N-terminal stretch at 1–27 (MESKGASSCRLLFCLLISATVFRPGLG) is a signal peptide. Ig-like V-type domains follow at residues 28-120 (WYTV…TEDN) and 125-234 (PTIV…KTIH). Residues 28–527 (WYTVNSAYGD…NREKVNDQAK (500 aa)) are Extracellular-facing. Disulfide bonds link C43/C113 and C157/C220. N-linked (GlcNAc...) asparagine glycans are attached at residues N91, N95, N167, N265, N306, N361, N457, N480, and N499. Ig-like C2-type domains lie at 245–328 (PTEQ…TAIT), 333–409 (DLSL…ESLT), and 416–501 (PQIK…LNVS). Disulfide bonds link C270–C313, C354–C392, and C435–C485. A helical transmembrane segment spans residues 528–549 (LIVGIVVGLLLAALVAGVVYWL). The Cytoplasmic segment spans residues 550 to 583 (YMKKSKTASKHVNKDLGNMEENKKLEENNHKTEA). The tract at residues 562–583 (NKDLGNMEENKKLEENNHKTEA) is disordered. Over residues 569–583 (EENKKLEENNHKTEA) the composition is skewed to basic and acidic residues.

As to quaternary structure, homodimer. Interacts (via extracellular domain) with CD6 (via extracellular domain). Homodimerization and interaction with CD6 involve the same region and cannot occur simultaneously. The affinity for CD6 is much higher than the affinity for self-association. Interacts (via glycosylated extracellular domain) with LGALS1 and LGALS3. Interaction with LGALS1 or LGALS3 inhibits interaction with CD6. In terms of processing, glycosylated. Detected on hematopoietic stem cells derived from umbilical cord blood. Detected on lymph vessel endothelial cells, skin and tonsil. Detected on peripheral blood monocytes. Detected on monocyte-derived dendritic cells (at protein level). Detected at low levels in spleen, placenta, liver. Expressed by activated T-cells, B-cells, monocytes and thymic epithelial cells. Isoform 1 and isoform 3 are detected in vein and artery endothelial cells, astrocytes, keratinocytes and artery smooth muscle cells. Expressed by neurons in the brain. Restricted expression in tumor cell lines. Detected in highly metastasizing melanoma cell lines.

Its subcellular location is the cell membrane. The protein localises to the cell projection. It localises to the axon. The protein resides in the dendrite. It is found in the secreted. In terms of biological role, cell adhesion molecule that mediates both heterotypic cell-cell contacts via its interaction with CD6, as well as homotypic cell-cell contacts. Promotes T-cell activation and proliferation via its interactions with CD6. Contributes to the formation and maturation of the immunological synapse via its interactions with CD6. Mediates homotypic interactions with cells that express ALCAM. Acts as a ligand for the LILRB4 receptor, enhancing LILRB4-mediated inhibition of T cell proliferation. Required for normal hematopoietic stem cell engraftment in the bone marrow. Mediates attachment of dendritic cells onto endothelial cells via homotypic interaction. Inhibits endothelial cell migration and promotes endothelial tube formation via homotypic interactions. Required for normal organization of the lymph vessel network. Required for normal hematopoietic stem cell engraftment in the bone marrow. Plays a role in hematopoiesis; required for normal numbers of hematopoietic stem cells in bone marrow. Promotes in vitro osteoblast proliferation and differentiation. Promotes neurite extension, axon growth and axon guidance; axons grow preferentially on surfaces that contain ALCAM. Mediates outgrowth and pathfinding for retinal ganglion cell axons. Functionally, inhibits activities of membrane-bound isoforms by competing for the same interaction partners. Inhibits cell attachment via homotypic interactions. Promotes endothelial cell migration. Inhibits endothelial cell tube formation. This Homo sapiens (Human) protein is CD166 antigen (ALCAM).